Consider the following 87-residue polypeptide: UPF0729 protein C18orf32 homolog (87 aa).

The protein belongs to the UPF0729 family.

The chain is UPF0729 protein C18orf32 homolog from Esox lucius (Northern pike).